The sequence spans 248 residues: uncharacterized protein (248 aa).

Residues 1–26 (MVAPRISPKIVLVGFALFAIISASLA) form the signal peptide.

This is an uncharacterized protein from Acanthamoeba polyphaga mimivirus (APMV).